A 107-amino-acid polypeptide reads, in one-letter code: Large ribosomal subunit protein P1 (107 aa).

Residues 67–82 show a composition bias toward low complexity; it reads GPASAAPAGAAGAAAP. Positions 67–107 are disordered; it reads GPASAAPAGAAGAAAPAEEKAEEKEEEKEESDEDMGFGLFD. Acidic residues predominate over residues 90-101; sequence KEEEKEESDEDM.

Belongs to the eukaryotic ribosomal protein P1/P2 family. P1 and P2 exist as dimers at the large ribosomal subunit.

It localises to the cytoplasm. In terms of biological role, plays an important role in the elongation step of protein synthesis. This Penicillium crustosum (Blue mold fungus) protein is Large ribosomal subunit protein P1.